Consider the following 638-residue polypeptide: Adhesion G-protein coupled receptor F2 (638 aa).

The N-terminal stretch at 1 to 25 (MISARWLYCLVLLLATESCRLFCQA) is a signal peptide. At 26 to 386 (ASKSKENVMP…ESPVLTYITY (361 aa)) the chain is on the extracellular side. Residues Asn155, Asn219, Asn248, Asn293, and Asn311 are each glycosylated (N-linked (GlcNAc...) asparagine). One can recognise a GAIN-B domain in the interval 233 to 377 (PRNSLGKNFT…SILMSPNTVE (145 aa)). Intrachain disulfides connect Cys329-Cys356 and Cys344-Cys358. The tract at residues 329-377 (CVGWHSLESRWDRRACKMIQENSRQAICRCQPNKFFTSFSILMSPNTVE) is GPS. The chain crosses the membrane as a helical span at residues 387-407 (IGLGISICSLIICLAIEALVW). At 408-422 (SQVTKTEISYLRHLC) the chain is on the cytoplasmic side. The helical transmembrane segment at 423–443 (IANIAVTLLMADVWFIVASFL) threads the bilayer. The Extracellular segment spans residues 444-465 (SGPIVHHNGCVTATFFVHFFYL). A helical membrane pass occupies residues 466–486 (SVFFWMLAKALLILYGILIVF). Over 487 to 493 (HTLPKSC) the chain is Cytoplasmic. The helical transmembrane segment at 494–514 (LVASLFTVGYGCPLVIAVITL) threads the bilayer. Topologically, residues 515 to 541 (AVTEPGKGYLRPEACWLNWDMTKALLA) are extracellular. Residues 542–562 (FVVPALAIVVVNLITVTLVII) traverse the membrane as a helical segment. Over 563–586 (KTQRAAVGSSMFQEVRAIVRICKN) the chain is Cytoplasmic. Residues 587–607 (IAILTPLLGLTWGFGIATVVA) traverse the membrane as a helical segment. At 608–610 (GHS) the chain is on the extracellular side. The chain crosses the membrane as a helical span at residues 611-631 (LAFHIIFSLLNALQVSPDAMI). The Cytoplasmic segment spans residues 632–638 (ESEWRGC).

This sequence belongs to the G-protein coupled receptor 2 family. Adhesion G-protein coupled receptor (ADGR) subfamily.

It localises to the membrane. Orphan receptor. This is Adhesion G-protein coupled receptor F2 (Adgrf2) from Rattus norvegicus (Rat).